A 170-amino-acid chain; its full sequence is Small ribosomal subunit protein uS15 (170 aa).

The segment covering 1 to 10 (MARMHSRKKG) has biased composition (basic residues). Positions 1–20 (MARMHSRKKGSSGSRPPVVD) are disordered.

This sequence belongs to the universal ribosomal protein uS15 family. In terms of assembly, part of the 30S ribosomal subunit.

This chain is Small ribosomal subunit protein uS15, found in Methanothrix thermoacetophila (strain DSM 6194 / JCM 14653 / NBRC 101360 / PT) (Methanosaeta thermophila).